Reading from the N-terminus, the 273-residue chain is Dermonecrotic toxin LarSicTox-alphaVII1 (273 aa).

His5 is a catalytic residue. Mg(2+)-binding residues include Glu25 and Asp27. His41 serves as the catalytic Nucleophile. Cystine bridges form between Cys45–Cys51 and Cys47–Cys192. Asp85 contributes to the Mg(2+) binding site.

The protein belongs to the arthropod phospholipase D family. Class II subfamily. It depends on Mg(2+) as a cofactor. In terms of tissue distribution, expressed by the venom gland.

The protein resides in the secreted. The catalysed reaction is an N-(acyl)-sphingosylphosphocholine = an N-(acyl)-sphingosyl-1,3-cyclic phosphate + choline. It carries out the reaction an N-(acyl)-sphingosylphosphoethanolamine = an N-(acyl)-sphingosyl-1,3-cyclic phosphate + ethanolamine. It catalyses the reaction a 1-acyl-sn-glycero-3-phosphocholine = a 1-acyl-sn-glycero-2,3-cyclic phosphate + choline. The enzyme catalyses a 1-acyl-sn-glycero-3-phosphoethanolamine = a 1-acyl-sn-glycero-2,3-cyclic phosphate + ethanolamine. Functionally, dermonecrotic toxins cleave the phosphodiester linkage between the phosphate and headgroup of certain phospholipids (sphingolipid and lysolipid substrates), forming an alcohol (often choline) and a cyclic phosphate. This toxin acts on sphingomyelin (SM). It may also act on ceramide phosphoethanolamine (CPE), lysophosphatidylcholine (LPC) and lysophosphatidylethanolamine (LPE), but not on lysophosphatidylserine (LPS), and lysophosphatidylglycerol (LPG). It acts by transphosphatidylation, releasing exclusively cyclic phosphate products as second products. Induces dermonecrosis, hemolysis, increased vascular permeability, edema, inflammatory response, and platelet aggregation. The sequence is that of Dermonecrotic toxin LarSicTox-alphaVII1 from Loxosceles arizonica (Arizona brown spider).